The following is a 780-amino-acid chain: E3 SUMO-protein ligase gei-17 (780 aa).

Residues 181–210 form a disordered region; that stretch reads APLHSSFPNHGRSSQQSLQKSEKSNRPKKM. The PINIT domain maps to 203-367; sequence KSNRPKKMYA…AAGVYFVHRV (165 aa). An SP-RING-type zinc finger spans residues 400–485; it reads GEDDIAMDRL…LAKVDKNTTE (86 aa). Residues Cys-431, His-433, Cys-454, and Cys-457 each coordinate Zn(2+). Residues 519-530 are compositionally biased toward polar residues; it reads GTASCSSTNGNG. 3 disordered regions span residues 519–544, 560–594, and 732–755; these read GTASCSSTNGNGLANEAAKKKPADDD, IMNSLNDSFSPGRHTASAELAAQKTPPQQKKKTKD, and QQHHLQQQQQQQQSPQIMSPSFYA. Residues 732-749 are compositionally biased toward low complexity; that stretch reads QQHHLQQQQQQQQSPQIM.

This sequence belongs to the PIAS family. May interact with gex-3.

Its pathway is protein modification; protein sumoylation. In terms of biological role, functions as an E3-type smo-1 ligase. Mediates smo-1 conjugation to air-2 in vitro and is required for proper chromosome alignment. In the early embryo, specifically suppresses checkpoint activation in response to DNA damage, maybe by promoting mus-101 sumoylation. In embryos, plays a role in determining telomere localization in the nucleus. Acts with pie-1 to promote piRNA-mediated silencing and fertility in the adult germline. The polypeptide is E3 SUMO-protein ligase gei-17 (Caenorhabditis elegans).